The primary structure comprises 916 residues: Oxysterol-binding protein 2 (916 aa).

Disordered regions lie at residues 1–20 (MGKA…SRGL), 34–121 (TAAP…PFTK), and 139–163 (PESG…TPLG). Residues 49 to 58 (EPKPQPQPVP) are compositionally biased toward pro residues. A compositionally biased stretch (low complexity) spans 79 to 92 (RSEPVSETTSEPEP). Residues 99 to 113 (ELLQGSRPGSESSSG) are compositionally biased toward polar residues. Over residues 144-155 (LPALKPLPLLRP) the composition is skewed to low complexity. Residues 182-274 (LDSFEGWLLK…WITALELAKA (93 aa)) form the PH domain. Disordered regions lie at residues 282–301 (THSD…DKSE) and 417–448 (FHSA…EEDE). Ser287 is subject to Phosphoserine. Position 763 is a phosphoserine (Ser763). Positions 813–842 (EGVAPTDSRLRPDQRLMEKGRWDEANTEKQ) are disordered.

Belongs to the OSBP family. As to quaternary structure, interacts with CCDC159. In terms of tissue distribution, expressed mainly in retina, testis, and fetal liver.

It localises to the membrane. It is found in the cytoplasmic vesicle. Its subcellular location is the secretory vesicle. The protein resides in the acrosome. Binds 7-ketocholesterol. Acts during spermatid development where its function is required prior to the removal of cytoplasm from the sperm head. The protein is Oxysterol-binding protein 2 (OSBP2) of Homo sapiens (Human).